The primary structure comprises 201 residues: NADH-quinone oxidoreductase subunit B 1 (201 aa).

Residues Cys80, Cys81, Cys145, and Cys175 each contribute to the [4Fe-4S] cluster site.

This sequence belongs to the complex I 20 kDa subunit family. In terms of assembly, NDH-1 is composed of 14 different subunits. Subunits NuoB, C, D, E, F, and G constitute the peripheral sector of the complex. It depends on [4Fe-4S] cluster as a cofactor.

The protein resides in the cell inner membrane. It carries out the reaction a quinone + NADH + 5 H(+)(in) = a quinol + NAD(+) + 4 H(+)(out). In terms of biological role, NDH-1 shuttles electrons from NADH, via FMN and iron-sulfur (Fe-S) centers, to quinones in the respiratory chain. The immediate electron acceptor for the enzyme in this species is believed to be ubiquinone. Couples the redox reaction to proton translocation (for every two electrons transferred, four hydrogen ions are translocated across the cytoplasmic membrane), and thus conserves the redox energy in a proton gradient. This is NADH-quinone oxidoreductase subunit B 1 from Rhodopseudomonas palustris (strain BisB18).